Here is a 324-residue protein sequence, read N- to C-terminus: MAFAKISQVAHYVPEQVVTNHDLAQIMDTNDEWISSRTGIRQRHISRTESTSDLATEVAKKLMAKAGITGKELDFIILATITPDSMMPSTAARVQANIGANKAFAFDLTAACSGFVFALSTAEKFIASGRFQKGLVIGSETLSKAVDWSDRSTAVLFGDGAGGVLLEASEQEHFLAESLNSDGSRSECLTYGHSGLHSPFSDQESADSFLKMDGRTVFDFAIRDVAKSIKQTIDESPIEVTDLDYLLLHQANDRILDKMARKIGVDRAKLPANMMEYGNTSAASIPILLSECVEQGLIPLDGSQTVLLSGFGGGLTWGTLILTI.

Catalysis depends on residues cysteine 112 and histidine 249. Residues 250–254 form an ACP-binding region; that stretch reads QANDR. Asparagine 279 is a catalytic residue.

Belongs to the thiolase-like superfamily. FabH family. Homodimer.

The protein localises to the cytoplasm. It catalyses the reaction malonyl-[ACP] + acetyl-CoA + H(+) = 3-oxobutanoyl-[ACP] + CO2 + CoA. The protein operates within lipid metabolism; fatty acid biosynthesis. Catalyzes the condensation reaction of fatty acid synthesis by the addition to an acyl acceptor of two carbons from malonyl-ACP. Catalyzes the first condensation reaction which initiates fatty acid synthesis and may therefore play a role in governing the total rate of fatty acid production. Possesses both acetoacetyl-ACP synthase and acetyl transacylase activities. Its substrate specificity determines the biosynthesis of branched-chain and/or straight-chain of fatty acids. This chain is Beta-ketoacyl-[acyl-carrier-protein] synthase III, found in Streptococcus pneumoniae serotype 19F (strain G54).